A 412-amino-acid polypeptide reads, in one-letter code: Adenosine receptor A2a (412 aa).

Residues 1–7 (MPTVGSL) are Extracellular-facing. A helical transmembrane segment spans residues 8 to 32 (VYIMVELAIALLAILGNMLVCWAVW). The Cytoplasmic segment spans residues 33 to 42 (LNSNLQNVTN). The helical transmembrane segment at 43–66 (YFVVSLAAADIAVGVLAIPFAITI) threads the bilayer. The Extracellular portion of the chain corresponds to 67–77 (STGFCAACHGC). 3 cysteine pairs are disulfide-bonded: Cys71-Cys159, Cys74-Cys146, and Cys77-Cys166. A helical transmembrane segment spans residues 78 to 100 (LFIACFVLVLTQSSIFSLLAIAI). The Cytoplasmic segment spans residues 101-120 (DRYIAIRIPLRYNGLVTGTR). The chain crosses the membrane as a helical span at residues 121 to 143 (AKGVIAVCWVLSFAIGLTPMLGW). The Extracellular portion of the chain corresponds to 144-173 (NNCHHWGEGENQSQGCGEGQVACLFEDVVP). A glycan (N-linked (GlcNAc...) asparagine) is linked at Asn154. Residue Glu169 participates in adenosine binding. A helical transmembrane segment spans residues 174-198 (MNYMVYYNFFACVLVPLLLMLGVYL). At 199–234 (RIFLAARRQLKQMETQPLPGERARSTLQKEVHAAKS) the chain is on the cytoplasmic side. A helical transmembrane segment spans residues 235–258 (LAIIVGLFALCWLPLHIINCFTFF). Asn253 is an adenosine binding site. Cys259 and Cys262 are joined by a disulfide. The Extracellular portion of the chain corresponds to 259-266 (CPECPHAP). A helical membrane pass occupies residues 267-290 (LWLMYPAIILSHFNSVVNPFIYAY). Adenosine-binding residues include Ser277 and His278. Residues 291-412 (RIREFRHTFH…PLAQDGAGVS (122 aa)) are Cytoplasmic-facing. The disordered stretch occupies residues 368-412 (RASARESPGDTGLPDVELLSHELHGASPESPGLEGPLAQDGAGVS).

This sequence belongs to the G-protein coupled receptor 1 family. As to quaternary structure, interacts (via cytoplasmic C-terminal domain) with USP4; the interaction is direct. May interact with DRD4. Interacts with NECAB2. Interacts (via cytoplasmic C-terminal domain) with GAS2L2; interaction enhances receptor-mediated adenylyl cyclase activity. Ubiquitinated. Deubiquitinated by USP4; leading to stabilization and expression at the cell surface.

The protein resides in the cell membrane. Receptor for adenosine. The activity of this receptor is mediated by G proteins which activate adenylyl cyclase. In Equus caballus (Horse), this protein is Adenosine receptor A2a (ADORA2A).